Here is a 289-residue protein sequence, read N- to C-terminus: MASGKEIRTKIKSVQNTRKITKAMEMVAASKMRKAQDRMRAARPYADKIRRLAANLSQANVTDYKHPFLVRKDQVKRVGLILVTTDKGLCGGLNTNVQRVAVNAMKEWEAAGATEIRACCIGNKGFGFMQRIGAKVVSHVTQLGDTPHLEKLIGPVKVMLDAFQNGELDAVYVAYTRFINTMKQEPQLEQLLPLTGEKLGTPDNSWDYLYEPDPQVVIDELLVRYVEALVYQAVAENMASEQSARMVAMKAASDNAKNVIGELQLVYNKTRQAAITKELSEIVGGAAAV.

The protein belongs to the ATPase gamma chain family. F-type ATPases have 2 components, CF(1) - the catalytic core - and CF(0) - the membrane proton channel. CF(1) has five subunits: alpha(3), beta(3), gamma(1), delta(1), epsilon(1). CF(0) has three main subunits: a, b and c.

It localises to the cell inner membrane. Its function is as follows. Produces ATP from ADP in the presence of a proton gradient across the membrane. The gamma chain is believed to be important in regulating ATPase activity and the flow of protons through the CF(0) complex. This is ATP synthase gamma chain from Azoarcus sp. (strain BH72).